Consider the following 117-residue polypeptide: Large ribosomal subunit protein bL20c (117 aa).

It belongs to the bacterial ribosomal protein bL20 family.

Its subcellular location is the plastid. The protein localises to the chloroplast. Its function is as follows. Binds directly to 23S ribosomal RNA and is necessary for the in vitro assembly process of the 50S ribosomal subunit. It is not involved in the protein synthesizing functions of that subunit. This chain is Large ribosomal subunit protein bL20c, found in Carica papaya (Papaya).